A 33-amino-acid polypeptide reads, in one-letter code: Cytochrome b6-f complex subunit 8 (33 aa).

Residues Leu2 to Val22 form a helical membrane-spanning segment.

This sequence belongs to the PetN family. The 4 large subunits of the cytochrome b6-f complex are cytochrome b6, subunit IV (17 kDa polypeptide, PetD), cytochrome f and the Rieske protein, while the 4 small subunits are PetG, PetL, PetM and PetN. The complex functions as a dimer.

The protein localises to the cellular thylakoid membrane. Functionally, component of the cytochrome b6-f complex, which mediates electron transfer between photosystem II (PSII) and photosystem I (PSI), cyclic electron flow around PSI, and state transitions. The protein is Cytochrome b6-f complex subunit 8 of Synechococcus sp. (strain CC9311).